Consider the following 60-residue polypeptide: Small ribosomal subunit protein eS31 (60 aa).

Zn(2+) is bound by residues C32, C35, C50, and C53. The segment at 32–53 (CPRCGAGVFMGEHKDRFSCGKC) adopts a C4-type zinc-finger fold.

Belongs to the eukaryotic ribosomal protein eS31 family. Part of the 30S ribosomal subunit. The cofactor is Zn(2+).

In Methanocorpusculum labreanum (strain ATCC 43576 / DSM 4855 / Z), this protein is Small ribosomal subunit protein eS31.